Consider the following 392-residue polypeptide: NADH dehydrogenase-like protein YjlD (392 aa).

The protein belongs to the NADH dehydrogenase family. Requires FAD as cofactor.

In Bacillus subtilis (strain 168), this protein is NADH dehydrogenase-like protein YjlD (yjlD).